The sequence spans 89 residues: Cell division topological specificity factor (89 aa).

This sequence belongs to the MinE family.

Functionally, prevents the cell division inhibition by proteins MinC and MinD at internal division sites while permitting inhibition at polar sites. This ensures cell division at the proper site by restricting the formation of a division septum at the midpoint of the long axis of the cell. In Desulforudis audaxviator (strain MP104C), this protein is Cell division topological specificity factor.